Here is a 154-residue protein sequence, read N- to C-terminus: MutT-like protein (154 aa).

The 122-residue stretch at 15-136 (PLHSVSVAGV…YAIRLLDALD (122 aa)) folds into the Nudix hydrolase domain. Mg(2+)-binding residues include glycine 48, glutamate 63, glutamate 66, and glutamate 67. The short motif at 48-69 (GVLELDETPETGVAREVWEETG) is the Nudix box element.

It belongs to the Nudix hydrolase family.

The polypeptide is MutT-like protein (Streptomyces ambofaciens).